The following is a 243-amino-acid chain: Anti-H(O) lectin 2 (243 aa).

An N-linked (GlcNAc...) asparagine glycan is attached at N115. Residues E127 and D129 each coordinate Mn(2+). Positions 129, 136, and 139 each coordinate Ca(2+). Positions 139 and 144 each coordinate Mn(2+).

Belongs to the leguminous lectin family. As to quaternary structure, homodimer.

Lactose- or galactose-binding anti-H(O) lectin. The chain is Anti-H(O) lectin 2 from Cytisophyllum sessilifolium (Sessile-leaved cytisus).